A 1532-amino-acid chain; its full sequence is IgA-specific serine endopeptidase autotransporter (1532 aa).

An N-terminal signal peptide occupies residues Met1–Ala27. The 295-residue stretch at Ala28–Lys322 folds into the Peptidase S6 domain. The active site involves Ser278. 2 disordered regions span residues Gly979–Ser1136 and Leu1166–Leu1217. Residues Ala989 to Gly1004 show a composition bias toward polar residues. Basic and acidic residues predominate over residues Glu1045–Ser1101. Over residues Lys1107–Ile1116 the composition is skewed to basic residues. Residues Ser1207–Leu1217 are compositionally biased toward basic and acidic residues. Residues Ala1280–Phe1532 form the Autotransporter domain.

It localises to the periplasm. The protein resides in the secreted. It is found in the cell surface. The protein localises to the cell outer membrane. It carries out the reaction Cleavage of immunoglobulin A molecules at certain Pro-|-Xaa bonds in the hinge region. No small molecule substrates are known.. In terms of biological role, this protease is specific for immunoglobulin A. The sequence is that of IgA-specific serine endopeptidase autotransporter (iga) from Neisseria gonorrhoeae.